Here is a 113-residue protein sequence, read N- to C-terminus: ATP-dependent Clp protease adapter protein ClpS (113 aa).

The protein belongs to the ClpS family. In terms of assembly, binds to the N-terminal domain of the chaperone ClpA.

In terms of biological role, involved in the modulation of the specificity of the ClpAP-mediated ATP-dependent protein degradation. This is ATP-dependent Clp protease adapter protein ClpS from Corynebacterium diphtheriae (strain ATCC 700971 / NCTC 13129 / Biotype gravis).